A 978-amino-acid chain; its full sequence is Macrophage colony-stimulating factor 1 receptor (978 aa).

The signal sequence occupies residues 1 to 19 (MELGPPLVLLLATVWHGQG). The Extracellular segment spans residues 20–515 (APVIEPSGPE…QLPDESLFTP (496 aa)). 5 consecutive Ig-like C2-type domains span residues 24-104 (EPSG…VKDP), 107-197 (SWNL…KVNR), 204-298 (QIKL…VVES), 299-397 (AYLN…LTLR), and 398-503 (YPPE…SLGQ). 3 cysteine pairs are disulfide-bonded: Cys-42/Cys-84, Cys-127/Cys-177, and Cys-224/Cys-278. Residues Asn-45 and Asn-73 are each glycosylated (N-linked (GlcNAc...) asparagine). 7 N-linked (GlcNAc...) asparagine glycosylation sites follow: Asn-302, Asn-335, Asn-389, Asn-410, Asn-449, Asn-478, and Asn-491. An intrachain disulfide couples Cys-417 to Cys-483. A helical transmembrane segment spans residues 516–536 (VVVACMSVMSLLVLLLLLLLY). Topologically, residues 537–978 (KYKQKPKYQV…LQPNNYQFAC (442 aa)) are cytoplasmic. Positions 540–572 (QKPKYQVRWKIIERYEGNSYTFIDPTQLPYNEK) are regulatory juxtamembrane domain. 2 positions are modified to phosphotyrosine; by autocatalysis: Tyr-544 and Tyr-559. The 335-residue stretch at 580–914 (LQFGKTLGAG…CFLLQEQARL (335 aa)) folds into the Protein kinase domain. Residues 586–594 (LGAGAFGKV) and Lys-614 contribute to the ATP site. A phosphotyrosine; by autocatalysis mark is found at Tyr-697 and Tyr-706. The residue at position 711 (Ser-711) is a Phosphoserine. Residue Tyr-721 is modified to Phosphotyrosine; by autocatalysis. The active-site Proton acceptor is Asp-776. The interval 794-816 (DFGLARDIMNDSNYVVKGNARLP) is activation loop. Phosphotyrosine; by autocatalysis is present on residues Tyr-807 and Tyr-921. The segment at 921-957 (YANLPSSGGSSGSDSGGGSSGGSSSEPEEESSSEHLA) is disordered. The segment covering 929-941 (GSSGSDSGGGSSG) has biased composition (gly residues). Tyr-974 carries the phosphotyrosine; by autocatalysis modification.

The protein belongs to the protein kinase superfamily. Tyr protein kinase family. CSF-1/PDGF receptor subfamily. In terms of assembly, monomer. Homodimer. Interacts with CSF1 and IL34. Interaction with dimeric CSF1 or IL34 leads to receptor homodimerization. Interacts with INPPL1/SHIP2 and THOC5. Interacts (tyrosine phosphorylated) with PLCG2 (via SH2 domain). Interacts (tyrosine phosphorylated) with PIK3R1 (via SH2 domain). Interacts (tyrosine phosphorylated) with FYN, YES1 and SRC (via SH2 domain). Interacts (tyrosine phosphorylated) with CBL, GRB2 and SLA2. Post-translationally, autophosphorylated in response to CSF1 or IL34 binding. Phosphorylation at Tyr-559 is important for normal down-regulation of signaling by ubiquitination, internalization and degradation. Phosphorylation at Tyr-559 and Tyr-807 is important for interaction with SRC family members, including FYN, YES1 and SRC, and for subsequent activation of these protein kinases. Phosphorylation at Tyr-697 and Tyr-921 is important for interaction with GRB2. Phosphorylation at Tyr-721 is important for interaction with PIK3R1. Phosphorylation at Tyr-721 and Tyr-807 is important for interaction with PLCG2. Phosphorylation at Tyr-974 is important for interaction with CBL. Dephosphorylation by PTPN2 negatively regulates downstream signaling and macrophage differentiation. In terms of processing, ubiquitinated. Becomes rapidly polyubiquitinated after autophosphorylation, leading to its degradation.

The protein localises to the cell membrane. The enzyme catalyses L-tyrosyl-[protein] + ATP = O-phospho-L-tyrosyl-[protein] + ADP + H(+). Its activity is regulated as follows. Present in an inactive conformation in the absence of bound ligand. CSF1 or IL34 binding leads to dimerization and activation by autophosphorylation on tyrosine residues. Functionally, tyrosine-protein kinase that acts as a cell-surface receptor for CSF1 and IL34 and plays an essential role in the regulation of survival, proliferation and differentiation of hematopoietic precursor cells, especially mononuclear phagocytes, such as macrophages and monocytes. Promotes the release of pro-inflammatory chemokines in response to IL34 and CSF1, and thereby plays an important role in innate immunity and in inflammatory processes. Plays an important role in the regulation of osteoclast proliferation and differentiation, the regulation of bone resorption, and is required for normal bone and tooth development. Required for normal male and female fertility, and for normal development of milk ducts and acinar structures in the mammary gland during pregnancy. Promotes reorganization of the actin cytoskeleton, regulates formation of membrane ruffles, cell adhesion and cell migration, and promotes cancer cell invasion. Activates several signaling pathways in response to ligand binding, including the ERK1/2 and the JNK pathway. Phosphorylates PIK3R1, PLCG2, GRB2, SLA2 and CBL. Activation of PLCG2 leads to the production of the cellular signaling molecules diacylglycerol and inositol 1,4,5-trisphosphate, that then lead to the activation of protein kinase C family members, especially PRKCD. Phosphorylation of PIK3R1, the regulatory subunit of phosphatidylinositol 3-kinase, leads to activation of the AKT1 signaling pathway. Activated CSF1R also mediates activation of the MAP kinases MAPK1/ERK2 and/or MAPK3/ERK1, and of the SRC family kinases SRC, FYN and YES1. Activated CSF1R transmits signals both via proteins that directly interact with phosphorylated tyrosine residues in its intracellular domain, or via adapter proteins, such as GRB2. Promotes activation of STAT family members STAT3, STAT5A and/or STAT5B. Promotes tyrosine phosphorylation of SHC1 and INPP5D/SHIP-1. Receptor signaling is down-regulated by protein phosphatases, such as INPP5D/SHIP-1, that dephosphorylate the receptor and its downstream effectors, and by rapid internalization of the activated receptor. In the central nervous system, may play a role in the development of microglia macrophages. The sequence is that of Macrophage colony-stimulating factor 1 receptor (Csf1r) from Rattus norvegicus (Rat).